The sequence spans 429 residues: Protein ABERRANT PANICLE ORGANIZATION 1 (429 aa).

Over residues 1 to 11 the composition is skewed to pro residues; it reads MMNPRRLPPLP. Positions 1–21 are disordered; sequence MMNPRRLPPLPSSTSSASAAD. The 47-residue stretch at 25 to 71 folds into the F-box domain; the sequence is PRVWRRLPQPLVDRILACLPTPSFLRLRAACRRFYHLLFSSPFLHSH. Transmembrane regions (helical) follow at residues 72–92 and 112–132; these read LLLSPHLPFFAFVVPAAGHLL and VAGGPAAFSPAAASAGLLAFL. Kelch repeat units follow at residues 229–277, 284–339, and 350–397; these read MAFA…ELGG, RVAL…AEGG, and YVVL…GAAG.

As to quaternary structure, part of a putative SCF (ASK/Cullin/F-box) ubiquitin ligase complex. Interacts with FL/APO2. In terms of tissue distribution, expressed in apical meristems and the lateral organ primordia throughout development. Expressed in seedlings, roots, leaves, shoot apical meristem (SAM), developing panicles, and, at lower levels, in developing seeds.

The protein localises to the membrane. It participates in protein modification; protein ubiquitination. Component of SCF(ASK-cullin-F-box) E3 ubiquitin ligase complexes, which may mediate the ubiquitination and subsequent proteasomal degradation of target proteins. Together with FL/APO2, involved in the temporal regulation of meristem identity during both vegetative and reproductive developments in an APO2-dependent manner. Promotes spikelet formation by suppressing the precocious conversion of inflorescence meristems to spikelet meristems, probably via a positive regulation of class-C floral homeotic genes, but not of class-B genes, and through the control of cell proliferation in meristems. Mediates culm development and strength/diameter enhancement at internodes. Required for the regulation of the plastochron, floral organ identity, and floral determinacy. Controls the number of primary rachis branches (PRBs). May trigger the formation of vascular bundle systems which, consequently, promote carbohydrate translocation to panicles. Involved in ozone-induced grain yield regulation. In Oryza sativa subsp. japonica (Rice), this protein is Protein ABERRANT PANICLE ORGANIZATION 1.